Consider the following 469-residue polypeptide: Adenosylhomocysteinase (469 aa).

Residues Thr63, Asp139, and Glu164 each contribute to the substrate site. An NAD(+)-binding site is contributed by Thr165 to Thr167. Positions 194 and 198 each coordinate substrate. NAD(+) is bound by residues Asn199, Gly228–Gly233, Glu251, Asn300, Ile321–His323, and Asn375.

This sequence belongs to the adenosylhomocysteinase family. The cofactor is NAD(+).

The protein resides in the cytoplasm. It catalyses the reaction S-adenosyl-L-homocysteine + H2O = L-homocysteine + adenosine. It participates in amino-acid biosynthesis; L-homocysteine biosynthesis; L-homocysteine from S-adenosyl-L-homocysteine: step 1/1. Functionally, may play a key role in the regulation of the intracellular concentration of adenosylhomocysteine. The chain is Adenosylhomocysteinase from Pseudomonas aeruginosa (strain UCBPP-PA14).